The sequence spans 161 residues: uncharacterized protein (161 aa).

Belongs to the sapovirus VP3 family.

This is an uncharacterized protein from Sapporo virus (strain Human/United Kingdom/Manchester/1993) (Hu/SV/Man/1993/UK).